A 98-amino-acid polypeptide reads, in one-letter code: Histone H4-1 (98 aa).

Positions 1–14 (MGGKGGKGGKGLGK) are enriched in gly residues. Positions 1–20 (MGGKGGKGGKGLGKVGAKKR) are disordered.

Belongs to the histone H4 family. As to quaternary structure, the nucleosome is a histone octamer containing two molecules each of H2A, H2B, H3 and H4 assembled in one H3-H4 heterotetramer and two H2A-H2B heterodimers. The octamer wraps approximately 147 bp of DNA.

The protein resides in the nucleus. It is found in the chromosome. In terms of biological role, core component of nucleosome. Nucleosomes wrap and compact DNA into chromatin, limiting DNA accessibility to the cellular machineries which require DNA as a template. Histones thereby play a central role in transcription regulation, DNA repair, DNA replication and chromosomal stability. DNA accessibility is regulated via a complex set of post-translational modifications of histones, also called histone code, and nucleosome remodeling. In Blepharisma japonicum, this protein is Histone H4-1.